Reading from the N-terminus, the 381-residue chain is Homoserine O-succinyltransferase (381 aa).

Residues 45-360 (NAVLVCHALN…PHGHDAFLLD (316 aa)) enclose the AB hydrolase-1 domain. Catalysis depends on serine 151, which acts as the Nucleophile. Arginine 221 is a substrate binding site. Catalysis depends on residues aspartate 321 and histidine 354. Aspartate 355 contributes to the substrate binding site.

Belongs to the AB hydrolase superfamily. MetX family. In terms of assembly, homodimer.

Its subcellular location is the cytoplasm. The enzyme catalyses L-homoserine + succinyl-CoA = O-succinyl-L-homoserine + CoA. Its pathway is amino-acid biosynthesis; L-methionine biosynthesis via de novo pathway; O-succinyl-L-homoserine from L-homoserine: step 1/1. Its function is as follows. Transfers a succinyl group from succinyl-CoA to L-homoserine, forming succinyl-L-homoserine. In Burkholderia cenocepacia (strain HI2424), this protein is Homoserine O-succinyltransferase.